Consider the following 435-residue polypeptide: Gamma-glutamyl phosphate reductase (435 aa).

Belongs to the gamma-glutamyl phosphate reductase family.

The protein localises to the cytoplasm. It catalyses the reaction L-glutamate 5-semialdehyde + phosphate + NADP(+) = L-glutamyl 5-phosphate + NADPH + H(+). Its pathway is amino-acid biosynthesis; L-proline biosynthesis; L-glutamate 5-semialdehyde from L-glutamate: step 2/2. Catalyzes the NADPH-dependent reduction of L-glutamate 5-phosphate into L-glutamate 5-semialdehyde and phosphate. The product spontaneously undergoes cyclization to form 1-pyrroline-5-carboxylate. This Nostoc punctiforme (strain ATCC 29133 / PCC 73102) protein is Gamma-glutamyl phosphate reductase.